Reading from the N-terminus, the 917-residue chain is Isoleucine--tRNA ligase (917 aa).

The short motif at 57 to 67 (PYANGNLHMGH) is the 'HIGH' region element. Residue Glu-554 participates in L-isoleucyl-5'-AMP binding. Positions 595–599 (KMSKS) match the 'KMSKS' region motif. ATP is bound at residue Lys-598. Cys-886, Cys-889, Cys-906, and Cys-909 together coordinate Zn(2+).

Belongs to the class-I aminoacyl-tRNA synthetase family. IleS type 1 subfamily. Monomer. Zn(2+) is required as a cofactor.

Its subcellular location is the cytoplasm. The catalysed reaction is tRNA(Ile) + L-isoleucine + ATP = L-isoleucyl-tRNA(Ile) + AMP + diphosphate. Its function is as follows. Catalyzes the attachment of isoleucine to tRNA(Ile). As IleRS can inadvertently accommodate and process structurally similar amino acids such as valine, to avoid such errors it has two additional distinct tRNA(Ile)-dependent editing activities. One activity is designated as 'pretransfer' editing and involves the hydrolysis of activated Val-AMP. The other activity is designated 'posttransfer' editing and involves deacylation of mischarged Val-tRNA(Ile). This Staphylococcus aureus (strain MSSA476) protein is Isoleucine--tRNA ligase (ileS).